The following is a 647-amino-acid chain: MLTWKNNLTPVSEQFDDIYFSPENGLEETKHVFIKGNDLYNRWRNWNIQNAFCILELGFGTGLNFLTTWKEYLEYKDRFRLHFISIEKFPLNREEISKALSIFSELVEIKKEFLSSYQDLIPGMNYFQFLGGKIHFSLFLGDVSSALCEISGKVDAIFLDGFAPSKNPEMWDKSVLENLKYVSKKGTTLSTFTVARMVRDSLSFSGFKLEKRPGFGRKREMLIGSYSDSFLESNPKEKPWCKRAYPELQIKTVAIVGAGIAGTTLAYSLSRRGIQVFLIDPSGIAKETSGIPMAISHPHLTKIPGPISLFTLRAFRYALSFLSSFADQNFFEKTGLFHSVTQEMDSERLQKGIENHKLSEEIVFWKPIASKFQNGDFLENEPGVFFRNGFWTRPESIAKKCAEQPGVEFIKGTASRIEQDGTSWKLLIQESGHEIVANSIIFCNSHSIGKLIASLFEGEEPFPIRKVRGQLISLKETEKSSRISNILCAEHYLTPSILGEHILGSTFDEFDLNPLPQKKDTDRLLEFVQNKYPSLNFDSSCVLIEKVGLRAQTPDRLPILGPVFDPREFRKIYKEIDLPKNRNKKFPNLKTIQGLYVFGGLGSRGILSSFLGSEIMASLILGEPVPVESSVLEYLHPARFLYRKVRK.

Residues 1–227 are tRNA (mnm(5)s(2)U34)-methyltransferase; sequence MLTWKNNLTP…KREMLIGSYS (227 aa). An FAD-dependent cmnm(5)s(2)U34 oxidoreductase region spans residues 256–647; it reads VGAGIAGTTL…ARFLYRKVRK (392 aa).

It in the N-terminal section; belongs to the methyltransferase superfamily. tRNA (mnm(5)s(2)U34)-methyltransferase family. In the C-terminal section; belongs to the DAO family. Requires FAD as cofactor.

It localises to the cytoplasm. The enzyme catalyses 5-aminomethyl-2-thiouridine(34) in tRNA + S-adenosyl-L-methionine = 5-methylaminomethyl-2-thiouridine(34) in tRNA + S-adenosyl-L-homocysteine + H(+). Functionally, catalyzes the last two steps in the biosynthesis of 5-methylaminomethyl-2-thiouridine (mnm(5)s(2)U) at the wobble position (U34) in tRNA. Catalyzes the FAD-dependent demodification of cmnm(5)s(2)U34 to nm(5)s(2)U34, followed by the transfer of a methyl group from S-adenosyl-L-methionine to nm(5)s(2)U34, to form mnm(5)s(2)U34. In Leptospira interrogans serogroup Icterohaemorrhagiae serovar copenhageni (strain Fiocruz L1-130), this protein is tRNA 5-methylaminomethyl-2-thiouridine biosynthesis bifunctional protein MnmC.